The chain runs to 366 residues: MVIKFLSALILLLVTTAVQAERIRDLTSVQGVRQNSLIGYGLVVGLDGTGDQTTQTPFTTQTLNNMLSQLGITVPTGTNMQLKNVAAVMVTASLPPFGRQGQTIDVVVSSMGNAKSLRGGTLLMTPLKGVDSQVYALAQGNILVGGAGASAGGSSVQVNQLNGGRITNGAVIERELPSQFGVGNTLNLQLNDEDFSMAQQIADTINRVRGYGSATALDARTIQVRVPSGNSSQVRFLADIQNMQVNVTPQDAKVVINSRTGSVVMNREVTLDSCAVAQGNLSVTVNRQANVSQPDTPFGGGQTVVTPQTQIDLRQSGGSLQSVRSSASLNNVVRALNALGATPMDLMSILQSMQSAGCLRAKLEII.

The N-terminal stretch at 1-20 is a signal peptide; it reads MVIKFLSALILLLVTTAVQA.

It belongs to the FlgI family. As to quaternary structure, the basal body constitutes a major portion of the flagellar organelle and consists of four rings (L,P,S, and M) mounted on a central rod.

Its subcellular location is the periplasm. It is found in the bacterial flagellum basal body. Assembles around the rod to form the L-ring and probably protects the motor/basal body from shearing forces during rotation. This is Flagellar P-ring protein from Escherichia coli O6:H1 (strain CFT073 / ATCC 700928 / UPEC).